Consider the following 575-residue polypeptide: Guanine nucleotide-binding protein-like 3-like protein (575 aa).

Over residues 1–30 (MMKLRHKNKKPGKGSKGCKKPAKQNGKKAA) the composition is skewed to basic residues. The disordered stretch occupies residues 1-75 (MMKLRHKNKK…AAREQERHRR (75 aa)). The required for nucleolar localization stretch occupies residues 9–28 (KKPGKGSKGCKKPAKQNGKK). The span at 42-72 (SNDHASREAELKKKRVGEMREKQQAAREQER) shows a compositional bias: basic and acidic residues. Positions 51-79 (ELKKKRVGEMREKQQAAREQERHRRRTIE) form a coiled coil. One can recognise a CP-type G domain in the interval 118-303 (YKEFHKVVEY…LLDAPGIVPG (186 aa)). Residues 166 to 169 (NKID), 252 to 259 (GLPNVGKS), and 296 to 299 (DAPG) contribute to the GTP site. Lysine 470 is covalently cross-linked (Glycyl lysine isopeptide (Lys-Gly) (interchain with G-Cter in SUMO1)).

This sequence belongs to the TRAFAC class YlqF/YawG GTPase family. In terms of assembly, interacts with MDM2; this interaction, which occurs in the nucleoplasm, stabilizes MDM2. Indirectly interacts with TP53, via MDM2-binding. Interacts with TERF1; this interaction probably occurs in the nucleoplasm and is increased during mitosis, when the nucleolus is disassembled. This binding may promote TERF1 homodimerization. Interacts with TERT.

Its subcellular location is the nucleus. The protein resides in the nucleolus. In terms of biological role, stabilizes TERF1 telomeric association by preventing TERF1 recruitment by PML. Stabilizes TERF1 protein by preventing its ubiquitination and hence proteasomal degradation. Does so by interfering with TERF1-binding to FBXO4 E3 ubiquitin-protein ligase. Required for cell proliferation. By stabilizing TRF1 protein during mitosis, promotes metaphase-to-anaphase transition. Stabilizes MDM2 protein by preventing its ubiquitination, and hence proteasomal degradation. By acting on MDM2, may affect TP53 activity. Required for normal processing of ribosomal pre-rRNA. Binds GTP. In Bos taurus (Bovine), this protein is Guanine nucleotide-binding protein-like 3-like protein (GNL3L).